A 103-amino-acid chain; its full sequence is UPF0091 protein PH0944 (103 aa).

It belongs to the UPF0091 family.

This chain is UPF0091 protein PH0944, found in Pyrococcus horikoshii (strain ATCC 700860 / DSM 12428 / JCM 9974 / NBRC 100139 / OT-3).